The following is a 250-amino-acid chain: Probable syntaxin-8B (250 aa).

Over 1 to 213 (MGDYWLNEHD…NRRMETIKQN (213 aa)) the chain is Cytoplasmic. Residues 73–100 (EKELLRRKNKVESLISMKNQLNSTLDAA) are a coiled coil. The t-SNARE coiled-coil homology domain occupies 148-210 (QHIMREQDES…RNANRRMETI (63 aa)). The chain crosses the membrane as a helical; Anchor for type IV membrane protein span at residues 214-234 (AGSTCMIVCIVILIILIVVLI). Topologically, residues 235 to 250 (ATDSGCKIYNDPKHCP) are vesicular.

It belongs to the syntaxin family.

It localises to the membrane. This chain is Probable syntaxin-8B (syn8B), found in Dictyostelium discoideum (Social amoeba).